A 154-amino-acid polypeptide reads, in one-letter code: Myoglobin (154 aa).

The Globin domain occupies 2-148 (GLSDGEWELV…FRNDIAAKYK (147 aa)). Ser4 carries the phosphoserine modification. Residue Thr68 is modified to Phosphothreonine. Residue His94 participates in heme b binding.

The protein belongs to the globin family. As to quaternary structure, monomeric.

The protein localises to the cytoplasm. The protein resides in the sarcoplasm. It carries out the reaction Fe(III)-heme b-[protein] + nitric oxide + H2O = Fe(II)-heme b-[protein] + nitrite + 2 H(+). The catalysed reaction is H2O2 + AH2 = A + 2 H2O. Its function is as follows. Monomeric heme protein which primary function is to store oxygen and facilitate its diffusion within muscle tissues. Reversibly binds oxygen through a pentacoordinated heme iron and enables its timely and efficient release as needed during periods of heightened demand. Depending on the oxidative conditions of tissues and cells, and in addition to its ability to bind oxygen, it also has a nitrite reductase activity whereby it regulates the production of bioactive nitric oxide. Under stress conditions, like hypoxia and anoxia, it also protects cells against reactive oxygen species thanks to its pseudoperoxidase activity. The sequence is that of Myoglobin (MB) from Elephas maximus (Indian elephant).